Consider the following 426-residue polypeptide: Dihydroorotase (426 aa).

Positions 58 and 60 each coordinate Zn(2+). Residues 60-62 (HLR) and N92 each bind substrate. Zn(2+)-binding residues include D150, H177, and H230. Substrate is bound at residue N276. D303 lines the Zn(2+) pocket. D303 is a catalytic residue. Substrate is bound by residues H307 and 321-322 (FG).

The protein belongs to the metallo-dependent hydrolases superfamily. DHOase family. Class I DHOase subfamily. Zn(2+) serves as cofactor.

The catalysed reaction is (S)-dihydroorotate + H2O = N-carbamoyl-L-aspartate + H(+). It functions in the pathway pyrimidine metabolism; UMP biosynthesis via de novo pathway; (S)-dihydroorotate from bicarbonate: step 3/3. Its function is as follows. Catalyzes the reversible cyclization of carbamoyl aspartate to dihydroorotate. This Listeria monocytogenes serovar 1/2a (strain ATCC BAA-679 / EGD-e) protein is Dihydroorotase.